Consider the following 220-residue polypeptide: Coat protein TP4 (220 aa).

It localises to the virion. The chain is Coat protein TP4 from Thermoproteus tenax (TTV1).